Reading from the N-terminus, the 125-residue chain is Unclassified hydrophobin 8 (125 aa).

Residues 1–20 (MMFSKPVVLATTALATFAAA) form the signal peptide. Cystine bridges form between Cys-31/Cys-105, Cys-38/Cys-99, Cys-39/Cys-90, and Cys-106/Cys-119.

The protein belongs to the fungal hydrophobin family. In terms of assembly, self-assembles to form functional amyloid fibrils called rodlets. Self-assembly into fibrillar rodlets occurs spontaneously at hydrophobic:hydrophilic interfaces and the rodlets further associate laterally to form amphipathic monolayers.

Its subcellular location is the secreted. It localises to the cell wall. Functionally, aerial growth, conidiation, and dispersal of filamentous fungi in the environment rely upon a capability of their secreting small amphipathic proteins called hydrophobins (HPBs) with low sequence identity. Class I can self-assemble into an outermost layer of rodlet bundles on aerial cell surfaces, conferring cellular hydrophobicity that supports fungal growth, development and dispersal; whereas Class II form highly ordered films at water-air interfaces through intermolecular interactions but contribute nothing to the rodlet structure. Hydph8 is an unclassified hydrophobin involved in mycelial growth. This Pleurotus ostreatus (strain PC15) (Oyster mushroom) protein is Unclassified hydrophobin 8.